Here is a 739-residue protein sequence, read N- to C-terminus: UPF0313 protein YgiQ (739 aa).

One can recognise a Radical SAM core domain in the interval 372–650; it reads AYEMIRFSVN…KALLRYHDPA (279 aa). [4Fe-4S] cluster-binding residues include Cys386, Cys390, and Cys393. A disordered region spans residues 685 to 739; the sequence is REARRQNRNTRPALTKHTPMATQRQTPATAKKASSTQSRPVNAGAKKRPKAAVGR. Polar residues predominate over residues 704–724; sequence MATQRQTPATAKKASSTQSRP. Residues 729 to 739 show a composition bias toward basic residues; that stretch reads AKKRPKAAVGR.

Belongs to the UPF0313 family. [4Fe-4S] cluster serves as cofactor.

The polypeptide is UPF0313 protein YgiQ (Shigella flexneri).